We begin with the raw amino-acid sequence, 208 residues long: Uracil phosphoribosyltransferase (208 aa).

Residues Arg-78, Arg-103, and 130-138 contribute to the 5-phospho-alpha-D-ribose 1-diphosphate site; that span reads DPMLATGGS. Uracil-binding positions include Ile-193 and 198-200; that span reads GDA. Asp-199 provides a ligand contact to 5-phospho-alpha-D-ribose 1-diphosphate.

This sequence belongs to the UPRTase family. Mg(2+) is required as a cofactor.

It carries out the reaction UMP + diphosphate = 5-phospho-alpha-D-ribose 1-diphosphate + uracil. The protein operates within pyrimidine metabolism; UMP biosynthesis via salvage pathway; UMP from uracil: step 1/1. With respect to regulation, allosterically activated by GTP. Catalyzes the conversion of uracil and 5-phospho-alpha-D-ribose 1-diphosphate (PRPP) to UMP and diphosphate. The chain is Uracil phosphoribosyltransferase from Tolumonas auensis (strain DSM 9187 / NBRC 110442 / TA 4).